The sequence spans 951 residues: MAFANFRRILRLPNFEKKRLREYEHVRRDLDPNQVWEIIGELGDGAFGKVYKAKNKETGILAAAKVIETKNEEELEDYMVEIEILATCNHHFIVKLLGSYYWEGKLWIMIEFCPGGAVDAIMLELDRGLKEPEIRTICRQMLEGLTYLHSMKMIHRDLKAGNVLLTLDGDIKLADFGVSAKNVKTLQRRDSFIGTPYWMAPEVVMCETMKDAPYDYKADIWSLGITLIEMAQIEPPHHELNPMRVLLKIAKSEPPTLSSPSKWSPEFHNFLKTALDKNPETRPSAAQLLEHPFVKKVSGNKPLRDLVAEAKAEVLDEIEENGEVEEEEASDTPSSNKSVSQSALGEKDKHTGKEHVGNGIKAEPQNTDSQADIHSQKRNHEGKNYPEHNRHDAVNGKPDIIILNPVSSNHEPKRNSAAESYRNEEHGSAVSSNQRPKSSQSDRQSVELVPNGSFDSPTRYFTGWSKRDSDSGSNSASESMDISMNLSADLSINKETGSLSLRESRLHKKTLKRTRRFVVDGVEVSITTSKIIGDDEKKDEEMRFLRRQELRELRLLQKEEHRNQAQLTSKHSFQMEQMLRRFEQEMNSKRKFYDSELEALERHQKQQIERMEQEHALRRRDEARRIRTEQERDHVKFLEQLKLRKKELKAQVEKLPRQQRRDAMKVQMDDFAQKKHIEEQQFLNKQKEDLTLALRVIVLENRKEIYNKEREFLNKKQQLLRDREAVIWDLEERHLQERHQLVKQQLKDQYFLQRHELLRKHEKEQEQMQRYNQRMMEQLKLRQQQERARLPKNQKAEAKTRMTMFKKSLHISPSGSAAEQREKIKQFSLQEEKRQKAERLQQQQKHEHQLLEMQAECDCNVRDLLQMQNEKCHLLVEHETQKLKTLDEHHIQMIREWRENLRPRKKALEDELEHKKEEQEMFFRMNEEVAGHPFPSNKPAKFYSFSSPEAS.

In terms of domain architecture, Protein kinase spans 36–294 (WEIIGELGDG…AAQLLEHPFV (259 aa)). ATP-binding positions include 42-50 (LGDGAFGKV) and K65. The active-site Proton acceptor is the D157. Over residues 319-330 (EENGEVEEEEAS) the composition is skewed to acidic residues. Positions 319–479 (EENGEVEEEE…DSGSNSASES (161 aa)) are disordered. Over residues 331–343 (DTPSSNKSVSQSA) the composition is skewed to polar residues. Basic and acidic residues predominate over residues 345-356 (GEKDKHTGKEHV). Over residues 364-373 (PQNTDSQADI) the composition is skewed to polar residues. Basic and acidic residues-rich tracts occupy residues 374–394 (HSQK…HDAV) and 410–427 (HEPK…EEHG). A compositionally biased stretch (polar residues) spans 429–443 (AVSSNQRPKSSQSDR). 3 positions are modified to phosphoserine; by PLK1: S483, S487, and S491. Residues 583 to 723 (EQEMNSKRKF…NKKQQLLRDR (141 aa)) are a coiled coil. Residues 785–800 (QERARLPKNQKAEAKT) are compositionally biased toward basic and acidic residues. The disordered stretch occupies residues 785–804 (QERARLPKNQKAEAKTRMTM). Positions 898-928 (RENLRPRKKALEDELEHKKEEQEMFFRMNEE) form a coiled coil. Residues 930–951 (AGHPFPSNKPAKFYSFSSPEAS) form a disordered region.

This sequence belongs to the protein kinase superfamily. STE Ser/Thr protein kinase family. STE20 subfamily. In terms of assembly, homodimer. Autophosphorylates. Phosphorylated by plk1/plx1, suggesting the existence of a feedback loop with plk1/plx1. activation of the protein.

It localises to the cell membrane. The enzyme catalyses L-seryl-[protein] + ATP = O-phospho-L-seryl-[protein] + ADP + H(+). It catalyses the reaction L-threonyl-[protein] + ATP = O-phospho-L-threonyl-[protein] + ADP + H(+). Its function is as follows. May act as a polo kinase kinase by mediating phosphorylation of plk1/plx1 and subsequent activation of plk1/plx1 during oocyte maturation. The protein is Serine/threonine-protein kinase 10 (stk10) of Xenopus tropicalis (Western clawed frog).